The following is a 380-amino-acid chain: Glucose-1-phosphate adenylyltransferase (380 aa).

Alpha-D-glucose 1-phosphate contacts are provided by residues G164, 179–180 (EK), and S190.

The protein belongs to the bacterial/plant glucose-1-phosphate adenylyltransferase family. In terms of assembly, homotetramer.

It catalyses the reaction alpha-D-glucose 1-phosphate + ATP + H(+) = ADP-alpha-D-glucose + diphosphate. It participates in glycan biosynthesis; glycogen biosynthesis. Functionally, involved in the biosynthesis of ADP-glucose, a building block required for the elongation reactions to produce glycogen. Catalyzes the reaction between ATP and alpha-D-glucose 1-phosphate (G1P) to produce pyrophosphate and ADP-Glc. The protein is Glucose-1-phosphate adenylyltransferase of Streptococcus pneumoniae serotype 2 (strain D39 / NCTC 7466).